A 502-amino-acid polypeptide reads, in one-letter code: Lysine--tRNA ligase (502 aa).

Residues glutamate 413 and glutamate 420 each coordinate Mg(2+).

Belongs to the class-II aminoacyl-tRNA synthetase family. Homodimer. Mg(2+) is required as a cofactor.

It localises to the cytoplasm. The enzyme catalyses tRNA(Lys) + L-lysine + ATP = L-lysyl-tRNA(Lys) + AMP + diphosphate. The chain is Lysine--tRNA ligase from Haemophilus influenzae (strain 86-028NP).